The primary structure comprises 214 residues: Orotate phosphoribosyltransferase (214 aa).

A 5-phospho-alpha-D-ribose 1-diphosphate-binding site is contributed by Lys-26. 34–35 (FF) lines the orotate pocket. 5-phospho-alpha-D-ribose 1-diphosphate-binding positions include 72–73 (YK), Arg-99, Lys-100, Lys-103, His-105, and 124–132 (DDVITAGTA). Positions 128 and 157 each coordinate orotate.

This sequence belongs to the purine/pyrimidine phosphoribosyltransferase family. PyrE subfamily. As to quaternary structure, homodimer. Mg(2+) serves as cofactor.

The catalysed reaction is orotidine 5'-phosphate + diphosphate = orotate + 5-phospho-alpha-D-ribose 1-diphosphate. It functions in the pathway pyrimidine metabolism; UMP biosynthesis via de novo pathway; UMP from orotate: step 1/2. Functionally, catalyzes the transfer of a ribosyl phosphate group from 5-phosphoribose 1-diphosphate to orotate, leading to the formation of orotidine monophosphate (OMP). In Pseudomonas fluorescens (strain SBW25), this protein is Orotate phosphoribosyltransferase.